Reading from the N-terminus, the 132-residue chain is uncharacterized protein (132 aa).

The first 25 residues, 1–25, serve as a signal peptide directing secretion; sequence MRFTKVVGFLSVLGLAAVFPLTAQA.

This is an uncharacterized protein from Bacillus subtilis (strain 168).